The chain runs to 157 residues: S-ribosylhomocysteine lyase (157 aa).

The Fe cation site is built by H54, H58, and C126.

Belongs to the LuxS family. In terms of assembly, homodimer. It depends on Fe cation as a cofactor.

It carries out the reaction S-(5-deoxy-D-ribos-5-yl)-L-homocysteine = (S)-4,5-dihydroxypentane-2,3-dione + L-homocysteine. Its function is as follows. Involved in the synthesis of autoinducer 2 (AI-2) which is secreted by bacteria and is used to communicate both the cell density and the metabolic potential of the environment. The regulation of gene expression in response to changes in cell density is called quorum sensing. Catalyzes the transformation of S-ribosylhomocysteine (RHC) to homocysteine (HC) and 4,5-dihydroxy-2,3-pentadione (DPD). The sequence is that of S-ribosylhomocysteine lyase from Bacillus cytotoxicus (strain DSM 22905 / CIP 110041 / 391-98 / NVH 391-98).